The sequence spans 381 residues: Erythronate-4-phosphate dehydrogenase (381 aa).

Positions 45 and 66 each coordinate substrate. NAD(+) is bound by residues Asp146 and Thr173. Arg206 is an active-site residue. Residue Asp230 coordinates NAD(+). Glu235 is a catalytic residue. His252 functions as the Proton donor in the catalytic mechanism. Gly255 is a binding site for NAD(+). Tyr256 is a substrate binding site.

This sequence belongs to the D-isomer specific 2-hydroxyacid dehydrogenase family. PdxB subfamily. As to quaternary structure, homodimer.

It localises to the cytoplasm. It carries out the reaction 4-phospho-D-erythronate + NAD(+) = (R)-3-hydroxy-2-oxo-4-phosphooxybutanoate + NADH + H(+). It functions in the pathway cofactor biosynthesis; pyridoxine 5'-phosphate biosynthesis; pyridoxine 5'-phosphate from D-erythrose 4-phosphate: step 2/5. In terms of biological role, catalyzes the oxidation of erythronate-4-phosphate to 3-hydroxy-2-oxo-4-phosphonooxybutanoate. The chain is Erythronate-4-phosphate dehydrogenase from Hahella chejuensis (strain KCTC 2396).